The sequence spans 347 residues: 4-hydroxy-2-oxovalerate aldolase 4 (347 aa).

In terms of domain architecture, Pyruvate carboxyltransferase spans 9–259 (ITIVDTTLRD…DTGVDLFPLI (251 aa)). Substrate-binding positions include 17 to 18 (RD), S171, and H198. A Mn(2+)-binding site is contributed by D18. Mn(2+) is bound by residues H198 and H200. Y289 is a substrate binding site.

It belongs to the 4-hydroxy-2-oxovalerate aldolase family.

It catalyses the reaction (S)-4-hydroxy-2-oxopentanoate = acetaldehyde + pyruvate. This Rhodococcus opacus (strain B4) protein is 4-hydroxy-2-oxovalerate aldolase 4.